We begin with the raw amino-acid sequence, 367 residues long: Nodulation protein 10 (367 aa).

11 consecutive transmembrane segments (helical) span residues 15-37 (FDLLRLFAACQVMFSHAWNWLHL), 46-66 (VFDLLFSAPGVAIFFLISGFL), 88-108 (IFPALFVNIAVMELALLVTGG), 109-129 (LNVTGILQYLFYFTVYILTAA), 155-175 (VLWTLTVELTFYLTLPMLLEI), 183-203 (GALVVAVAALGSWVMAQHFNI), 208-228 (NPFLSVTAGPTFWIFSMGVLA), 245-265 (WWLATHLAITWWVAGTSAAFI), 270-290 (AAPVDAFRIAVLAGLVLSAAH), 312-332 (MLVMHTLIAIGWVGHWWLWIV), and 335-355 (VGTVALAALSWALIEQPAMKL).

Belongs to the acyltransferase 3 family.

Its subcellular location is the cell membrane. In terms of biological role, not known. NodX allows Rhizobium leguminosarum biovar viciae strain TOM to nodulate Afghanistan peas. The sequence is that of Nodulation protein 10 (nodX) from Rhizobium leguminosarum bv. viciae.